We begin with the raw amino-acid sequence, 133 residues long: Large ribosomal subunit protein eL14 (133 aa).

The protein belongs to the eukaryotic ribosomal protein eL14 family.

The chain is Large ribosomal subunit protein eL14 from Pisum sativum (Garden pea).